The sequence spans 427 residues: Protein TIFY 6a (427 aa).

A compositionally biased stretch (basic and acidic residues) spans 1-25 (MERDFLGAIWRKEEAAGKPEEHSDY). Disordered stretches follow at residues 1–32 (MERDFLGAIWRKEEAAGKPEEHSDYRGGGGGA) and 128–154 (YGVAAPHHFPSPSPSPRHPVPFGHANP). Pro residues predominate over residues 136-146 (FPSPSPSPRHP). Residues 196 to 231 (QNPKVTQMTIFYDGLVNVFDNIPVEKAQELMLLASR) enclose the Tify domain. The tract at residues 296–327 (SFSSSNDSAGPKSGGLPLAVTPLSQASPSQPI) is disordered. The span at 317–327 (PLSQASPSQPI) shows a compositional bias: polar residues. The Jas motif lies at 343–367 (PQARKASLARFLEKRKERVSSVAPY). The Nuclear localization signal signature appears at 345–352 (ARKASLAR). The segment at 361-427 (VSSVAPYPSS…QEPPSTKLQI (67 aa)) is disordered. Composition is skewed to polar residues over residues 369–402 (SSKSPLESSDTIGSPSTPSKSSCTDITPSTNNCE) and 411–427 (RNISFSSQEPPSTKLQI).

Belongs to the TIFY/JAZ family. As to quaternary structure, interacts with COI1A. Interacts with COI1A and COI1B in a coronatine-dependent manner. Coronatine is an analog of jasmonoyl isoleucine (JA-Ile). Post-translationally, ubiquitinated. Targeted for degradation by the SCF(COI1) E3 ubiquitin ligase-proteasome pathway during jasmonate signaling.

Its subcellular location is the nucleus. Repressor of jasmonate responses. This is Protein TIFY 6a from Oryza sativa subsp. japonica (Rice).